A 375-amino-acid polypeptide reads, in one-letter code: Terpene cyclase braA (375 aa).

Mg(2+)-binding residues include Asp-116, Asn-264, and Ser-268. A D(D/E)XX(D/E) motif motif is present at residues 116–120 (DDEID). Residues 264–272 (NDVLSLQKE) carry the NSE motif motif. Residues 348-355 (WSYSCERY) carry the WxxxxxRY motif motif. Arg-354 and Tyr-355 together coordinate (2E,6E)-farnesyl diphosphate.

Belongs to the terpene synthase family. Homodimer. It depends on Mg(2+) as a cofactor.

It catalyses the reaction (2E,6E)-farnesyl diphosphate + H2O = trichobrasilenol + diphosphate. It functions in the pathway secondary metabolite biosynthesis. Functionally, terpene cyclase; part of the gene cluster that mediates the biosynthesis of the brasilane terpene glycosides brasilane D and E. The biosynthesis starts with the activity of the terpene cyclase braA that converts farnesyl pyrophosphate into the sesquiterpene alcohol trichobrasilenol. Subsequently, trichobrasilenol is glycosylated by the O-glycosyltransferase braB putatively using UDP-GlcNAc as sugar donor to yield brasilane A. The latter then undergoes two rounds of oxidation performed by the cytochrome P450 monooxygenase braC. In the first round braC hydroxylates C-12 forming brasilane D, which serves as substrate in the second round to establish the epoxide at the bond between C-5 and C-10 and oxidize the alcohol at C-12 to an aldehyde leading to the final product brasilane E. The protein is Terpene cyclase braA of Annulohypoxylon truncatum (Hypoxylon truncatum).